A 275-amino-acid polypeptide reads, in one-letter code: C-type lectin domain family 12 member B (275 aa).

Residues 1-41 are Cytoplasmic-facing; that stretch reads MSDEVTYATLMLQDSARVRGNQDGNNLRKEGHPAQSSLWRG. Positions 5–10 match the ITIM motif motif; that stretch reads VTYATL. Tyr-7 carries the phosphotyrosine modification. Residues 42–64 form a helical; Signal-anchor for type II membrane protein membrane-spanning segment; the sequence is AALSLMTLCLVLVTGLVTLATMF. At 65–275 the chain is on the extracellular side; sequence LQVSNDINSD…ASLVKTEDLD (211 aa). 3 N-linked (GlcNAc...) asparagine glycosylation sites follow: Asn-91, Asn-175, and Asn-236. Residues 149 to 263 form the C-type lectin domain; that stretch reads YGNSCYYFSI…CSAEIPWICE (115 aa). 2 disulfides stabilise this stretch: Cys-171/Cys-262 and Cys-241/Cys-254.

As to quaternary structure, homodimer. Interacts (via ITIM motif) with PTPN6. Interacts (via ITIM motif) with PTPN11; this interaction triggers dephosphorylation and activation of PTPN11.

The protein localises to the cell membrane. Its function is as follows. Inhibitory receptor postulated to negatively regulate immune and non-immune functions. Upon phosphorylation, recruits SH2 domain-containing PTPN6 and PTPN11 phosphatases to its ITIM motif and antagonizes activation signals. Although it inhibits KLRK1/NKG2D-mediated signaling, it does not bind known ligands of KLRK1/NKG2D and therefore is not its inhibitory counterpart. May limit activation of myeloid cell subsets in response to infection or tissue inflammation. May protect target cells against natural killer cell-mediated lysis. May negatively regulate cell cycle and differentiation of melanocytes via inactivation of STAT3. This chain is C-type lectin domain family 12 member B (Clec12b), found in Mus musculus (Mouse).